The sequence spans 729 residues: Beta-galactosidase 4 (729 aa).

The first 35 residues, 1-35 (MAPAPTPAAAAGRRVAVLAAALVAASLAASVGVAN), serve as a signal peptide directing secretion. Glu194 serves as the catalytic Proton donor. Glu263 functions as the Nucleophile in the catalytic mechanism.

This sequence belongs to the glycosyl hydrolase 35 family.

The protein localises to the secreted. Its subcellular location is the extracellular space. It localises to the apoplast. It carries out the reaction Hydrolysis of terminal non-reducing beta-D-galactose residues in beta-D-galactosides.. In Oryza sativa subsp. japonica (Rice), this protein is Beta-galactosidase 4.